Consider the following 399-residue polypeptide: Acetate kinase (399 aa).

Asn-10 contributes to the Mg(2+) binding site. ATP is bound at residue Lys-17. Arg-91 serves as a coordination point for substrate. The Proton donor/acceptor role is filled by Asp-148. ATP-binding positions include 208-212, 283-285, and 331-335; these read HLGNG, DCR, and GIGEN. Position 385 (Glu-385) interacts with Mg(2+).

Belongs to the acetokinase family. Homodimer. Requires Mg(2+) as cofactor. Mn(2+) is required as a cofactor.

The protein resides in the cytoplasm. It catalyses the reaction acetate + ATP = acetyl phosphate + ADP. It participates in metabolic intermediate biosynthesis; acetyl-CoA biosynthesis; acetyl-CoA from acetate: step 1/2. Catalyzes the formation of acetyl phosphate from acetate and ATP. Can also catalyze the reverse reaction. In Shewanella sp. (strain MR-4), this protein is Acetate kinase.